A 262-amino-acid chain; its full sequence is Tropinone reductase homolog At2g29290 (262 aa).

Residue 13–37 (LVTGGTKGIGEAVVEELSILGARVH) participates in NADP(+) binding. Ser146 is a binding site for substrate. The active-site Proton acceptor is the Tyr159.

This sequence belongs to the short-chain dehydrogenases/reductases (SDR) family. SDR65C subfamily.

In Arabidopsis thaliana (Mouse-ear cress), this protein is Tropinone reductase homolog At2g29290.